The sequence spans 366 residues: Growth/differentiation factor 3 (366 aa).

The signal sequence occupies residues 1–22; sequence MQPYQRLLALGFLLLTLPWGQT. A propeptide spanning residues 23-252 is cleaved from the precursor; that stretch reads SEFQDSDLLQ…HCHPSSRKRR (230 aa). 2 N-linked (GlcNAc...) asparagine glycosylation sites follow: Asn113 and Asn308. 3 disulfide bridges follow: Cys266/Cys331, Cys295/Cys363, and Cys299/Cys365.

This sequence belongs to the TGF-beta family. In terms of assembly, homodimer. Heterodimer (Potential). But, in contrast to other members of this family, cannot be disulfide-linked. Post-translationally, synthesized as large precursor molecule that undergo proteolytic cleavage, releasing the pro-domain from the active, receptor binding, C-terminal region of the molecule. Primarily in adult bone marrow, spleen, thymus and adipose tissue.

The protein localises to the secreted. The protein resides in the cytoplasm. In terms of biological role, growth factor involved in early embryonic development and adipose-tissue homeostasis. During embryogenesis controls formation of anterior visceral endoderm and mesoderm and the establishment of anterior-posterior identity through a receptor complex comprising the receptor ACVR1B and the coreceptor CRIPTO. Regulates adipose-tissue homeostasis and energy balance under nutrient overload in part by signaling through the receptor complex based on ACVR1C and CRIPTO. In Mus musculus (Mouse), this protein is Growth/differentiation factor 3 (Gdf3).